Reading from the N-terminus, the 283-residue chain is Pyridoxine/pyridoxal/pyridoxamine kinase (283 aa).

Positions 23 and 59 each coordinate substrate. Asp-125 serves as a coordination point for ATP. Tyr-136 is a binding site for Mg(2+). ATP is bound by residues Thr-157, Glu-162, Thr-195, 222–225, and Thr-232; that span reads HAHV. Residue Glu-162 coordinates Mg(2+). Asp-234 is a substrate binding site.

Belongs to the pyridoxine kinase family. PdxK subfamily. Homodimer. The cofactor is Mg(2+).

It carries out the reaction pyridoxal + ATP = pyridoxal 5'-phosphate + ADP + H(+). The catalysed reaction is pyridoxine + ATP = pyridoxine 5'-phosphate + ADP + H(+). The enzyme catalyses pyridoxamine + ATP = pyridoxamine 5'-phosphate + ADP + H(+). It functions in the pathway cofactor metabolism; pyridoxal 5'-phosphate salvage; pyridoxal 5'-phosphate from pyridoxal: step 1/1. The protein operates within cofactor metabolism; pyridoxal 5'-phosphate salvage; pyridoxine 5'-phosphate from pyridoxine: step 1/1. Its pathway is cofactor metabolism; pyridoxal 5'-phosphate salvage; pyridoxamine 5'-phosphate from pyridoxamine: step 1/1. Functionally, B6-vitamer kinase involved in the salvage pathway of pyridoxal 5'-phosphate (PLP). Catalyzes the phosphorylation of pyridoxine (PN), pyridoxal (PL), and pyridoxamine (PM), forming their respective 5'-phosphorylated esters, i.e. PNP, PLP and PMP. The protein is Pyridoxine/pyridoxal/pyridoxamine kinase of Bordetella pertussis (strain Tohama I / ATCC BAA-589 / NCTC 13251).